A 346-amino-acid chain; its full sequence is Heparan sulfate glucosamine 3-O-sulfotransferase 5 (346 aa).

Residues M1–K12 lie on the Cytoplasmic side of the membrane. Residues L13 to G32 traverse the membrane as a helical; Signal-anchor for type II membrane protein segment. Residues S33–P346 are Lumenal-facing. Residue K100–R104 participates in 3'-phosphoadenylyl sulfate binding. Substrate contacts are provided by residues E122 to N128 and K155 to A158. 3'-phosphoadenylyl sulfate is bound by residues R183 and S191. Position 226–227 (Y226–K227) interacts with substrate. N287 is a glycosylation site (N-linked (GlcNAc...) asparagine). Residue Y293 coordinates 3'-phosphoadenylyl sulfate. C294 and C304 are oxidised to a cystine. K309–H313 serves as a coordination point for 3'-phosphoadenylyl sulfate.

It belongs to the sulfotransferase 1 family. As to expression, highly expressed in skeletal muscle and fetal brain, and also found in adult brain, spinal cord, cerebellum and colon.

It localises to the golgi apparatus membrane. The enzyme catalyses alpha-D-glucosaminyl-[heparan sulfate](n) + 3'-phosphoadenylyl sulfate = 3-sulfo-alpha-D-glucosaminyl-[heparan sulfate](n) + adenosine 3',5'-bisphosphate + H(+). Functionally, sulfotransferase that utilizes 3'-phospho-5'-adenylyl sulfate (PAPS) to catalyze the transfer of a sulfo group to position 3 of glucosamine residues in heparan. Catalyzes the rate limiting step in the biosynthesis of heparan sulfate (HSact). This modification is a crucial step in the biosynthesis of anticoagulant heparan sulfate as it completes the structure of the antithrombin pentasaccharide binding site. Also generates GlcUA-GlcNS or IdoUA-GlcNS and IdoUA2S-GlcNH2. The substrate-specific O-sulfation generates an enzyme-modified heparan sulfate which acts as a binding receptor to Herpes simplex virus-1 (HSV-1) and permits its entry. This chain is Heparan sulfate glucosamine 3-O-sulfotransferase 5 (HS3ST5), found in Homo sapiens (Human).